Here is a 402-residue protein sequence, read N- to C-terminus: Deoxyguanosinetriphosphate triphosphohydrolase-like protein (402 aa).

The interval 20–39 is disordered; it reads PAFSRGRLVPEPESPTRTPF. Positions 73-217 constitute an HD domain; the sequence is RLTHTIEVAQ…AAIADDIAYN (145 aa).

It belongs to the dGTPase family. Type 2 subfamily.

The sequence is that of Deoxyguanosinetriphosphate triphosphohydrolase-like protein from Brucella ovis (strain ATCC 25840 / 63/290 / NCTC 10512).